The primary structure comprises 459 residues: uncharacterized protein (459 aa).

Position 285 is an N6-(pyridoxal phosphate)lysine (Lys285).

This sequence belongs to the class-III pyridoxal-phosphate-dependent aminotransferase family.

It localises to the cytoplasm. This is an uncharacterized protein from Schizosaccharomyces pombe (strain 972 / ATCC 24843) (Fission yeast).